A 355-amino-acid chain; its full sequence is Uroporphyrinogen decarboxylase (355 aa).

Residues 27–31 (RQAGR), Asp-77, Tyr-154, Thr-209, and His-328 contribute to the substrate site.

Belongs to the uroporphyrinogen decarboxylase family. As to quaternary structure, homodimer.

Its subcellular location is the cytoplasm. The catalysed reaction is uroporphyrinogen III + 4 H(+) = coproporphyrinogen III + 4 CO2. It functions in the pathway porphyrin-containing compound metabolism; protoporphyrin-IX biosynthesis; coproporphyrinogen-III from 5-aminolevulinate: step 4/4. Its function is as follows. Catalyzes the decarboxylation of four acetate groups of uroporphyrinogen-III to yield coproporphyrinogen-III. This is Uroporphyrinogen decarboxylase from Vibrio campbellii (strain ATCC BAA-1116).